Here is a 110-residue protein sequence, read N- to C-terminus: Chorion class B protein M2410 (110 aa).

Tandem repeats lie at residues 1–4 (YGGL), 5–9 (GYGGL), 10–14 (GYGGL), and 15–19 (GYGGL). A 4 X 5 AA tandem repeats of G-Y-G-G-L region spans residues 1–19 (YGGLGYGGLGYGGLGYGGL). A left arm region spans residues 1 to 27 (YGGLGYGGLGYGGLGYGGLGGGCGRGF). A central domain region spans residues 28 to 96 (SGGGLPVATA…GNGDVGITRE (69 aa)). Residues 97 to 110 (GGLGYGAGYGGGYG) are right arm (Gly-rich tandem repeats).

Belongs to the chorion protein family.

This protein is one of many from the eggshell of the silk moth. This Bombyx mori (Silk moth) protein is Chorion class B protein M2410.